The chain runs to 133 residues: Cytidine deaminase (133 aa).

In terms of domain architecture, CMP/dCMP-type deaminase spans 3–131 (VDLDWVHHKL…EILKGGFRSY (129 aa)). Residue 43–45 (NIE) coordinates substrate. Zn(2+) is bound at residue Cys54. The Proton donor role is filled by Glu56. 2 residues coordinate Zn(2+): Cys89 and Cys92.

It belongs to the cytidine and deoxycytidylate deaminase family. As to quaternary structure, homodimer. It depends on Zn(2+) as a cofactor.

It catalyses the reaction cytidine + H2O + H(+) = uridine + NH4(+). The catalysed reaction is 2'-deoxycytidine + H2O + H(+) = 2'-deoxyuridine + NH4(+). Functionally, this enzyme scavenges exogenous and endogenous cytidine and 2'-deoxycytidine for UMP synthesis. In Mycoplasma pneumoniae (strain ATCC 29342 / M129 / Subtype 1) (Mycoplasmoides pneumoniae), this protein is Cytidine deaminase (cdd).